We begin with the raw amino-acid sequence, 565 residues long: FACT complex subunit ctc-1 (565 aa).

2 disordered regions span residues 151–173 and 477–565; these read GNDG…ASAG and LGDD…KKTA. Gly residues predominate over residues 152–165; sequence NDGGKSNGHSGTGG. Composition is skewed to acidic residues over residues 478–489, 500–522, and 532–553; these read GDDDMASSDEEA, DEDE…AEEY, and GSEE…DDDE.

The protein belongs to the SSRP1 family. As to quaternary structure, forms a stable heterodimer with ctc-2/spt16. The dimer of ctc-1 and ctc-2 weakly associates with multiple molecules of nhp-1/nhp6 to form the FACT complex.

Its subcellular location is the nucleus. It localises to the chromosome. In terms of biological role, component of the FACT complex, a general chromatin factor that acts to reorganize nucleosomes. The FACT complex is involved in multiple processes that require DNA as a template such as mRNA elongation, DNA replication and DNA repair. During transcription elongation the FACT complex acts as a histone chaperone that both destabilizes and restores nucleosomal structure. It facilitates the passage of RNA polymerase II and transcription by promoting the dissociation of one histone H2A-H2B dimer from the nucleosome, then subsequently promotes the reestablishment of the nucleosome following the passage of RNA polymerase II. This Neurospora crassa (strain ATCC 24698 / 74-OR23-1A / CBS 708.71 / DSM 1257 / FGSC 987) protein is FACT complex subunit ctc-1 (ctc-1).